A 150-amino-acid chain; its full sequence is Cilia- and flagella-associated protein 68 (150 aa).

2 mn regions span residues 99 to 110 (TTYDTSYNNKMP) and 140 to 150 (KSTYMNSYSKP).

This sequence belongs to the CFAP68 family. In terms of assembly, microtubule inner protein component of sperm flagellar doublet microtubules.

The protein resides in the cytoplasm. Its subcellular location is the cytoskeleton. It localises to the cilium axoneme. The protein localises to the flagellum axoneme. It is found in the nucleus. The protein resides in the cell projection. Its subcellular location is the cilium. Its function is as follows. Microtubule inner protein (MIP) part of the dynein-decorated doublet microtubules (DMTs) in cilia axoneme, which is required for motile cilia beating. The protein is Cilia- and flagella-associated protein 68 of Homo sapiens (Human).